Here is a 191-residue protein sequence, read N- to C-terminus: ATP synthase subunit b (191 aa).

Residues 10 to 30 form a helical membrane-spanning segment; the sequence is FLVPGPTAIAELIVFLLILFI. The tract at residues 170–191 is disordered; the sequence is RAQRQPAASDVVGGQQREEVHR.

It belongs to the ATPase B chain family. F-type ATPases have 2 components, F(1) - the catalytic core - and F(0) - the membrane proton channel. F(1) has five subunits: alpha(3), beta(3), gamma(1), delta(1), epsilon(1). F(0) has three main subunits: a(1), b(2) and c(10-14). The alpha and beta chains form an alternating ring which encloses part of the gamma chain. F(1) is attached to F(0) by a central stalk formed by the gamma and epsilon chains, while a peripheral stalk is formed by the delta and b chains.

It localises to the cell membrane. Its function is as follows. F(1)F(0) ATP synthase produces ATP from ADP in the presence of a proton or sodium gradient. F-type ATPases consist of two structural domains, F(1) containing the extramembraneous catalytic core and F(0) containing the membrane proton channel, linked together by a central stalk and a peripheral stalk. During catalysis, ATP synthesis in the catalytic domain of F(1) is coupled via a rotary mechanism of the central stalk subunits to proton translocation. Component of the F(0) channel, it forms part of the peripheral stalk, linking F(1) to F(0). The polypeptide is ATP synthase subunit b (Acidothermus cellulolyticus (strain ATCC 43068 / DSM 8971 / 11B)).